We begin with the raw amino-acid sequence, 650 residues long: Acetyl-coenzyme A synthetase (650 aa).

Residues 191–194, T311, and N335 contribute to the CoA site; that span reads RGGR. Residues 387-389, 411-416, D501, and R516 each bind ATP; these read GEP and DTWWQT. S524 serves as a coordination point for CoA. An ATP-binding site is contributed by R527. Residues V538, H540, and I543 each coordinate Mg(2+). R585 provides a ligand contact to CoA. K610 bears the N6-acetyllysine mark.

The protein belongs to the ATP-dependent AMP-binding enzyme family. Mg(2+) serves as cofactor. Post-translationally, acetylated. Deacetylation by the SIR2-homolog deacetylase activates the enzyme.

It catalyses the reaction acetate + ATP + CoA = acetyl-CoA + AMP + diphosphate. Catalyzes the conversion of acetate into acetyl-CoA (AcCoA), an essential intermediate at the junction of anabolic and catabolic pathways. AcsA undergoes a two-step reaction. In the first half reaction, AcsA combines acetate with ATP to form acetyl-adenylate (AcAMP) intermediate. In the second half reaction, it can then transfer the acetyl group from AcAMP to the sulfhydryl group of CoA, forming the product AcCoA. This is Acetyl-coenzyme A synthetase from Vibrio vulnificus (strain CMCP6).